The primary structure comprises 309 residues: Acetyl-coenzyme A carboxylase carboxyl transferase subunit beta (309 aa).

In terms of domain architecture, CoA carboxyltransferase N-terminal spans 29 to 298 (NSDWTSCCKG…AINSSENETS (270 aa)). The Zn(2+) site is built by Cys35, Cys36, Cys52, and Cys55.

This sequence belongs to the AccD/PCCB family. As to quaternary structure, acetyl-CoA carboxylase is a heterohexamer composed of biotin carboxyl carrier protein (AccB), biotin carboxylase (AccC) and two subunits each of ACCase subunit alpha (AccA) and ACCase subunit beta (AccD). It depends on Zn(2+) as a cofactor.

Its subcellular location is the cytoplasm. It catalyses the reaction N(6)-carboxybiotinyl-L-lysyl-[protein] + acetyl-CoA = N(6)-biotinyl-L-lysyl-[protein] + malonyl-CoA. It functions in the pathway lipid metabolism; malonyl-CoA biosynthesis; malonyl-CoA from acetyl-CoA: step 1/1. In terms of biological role, component of the acetyl coenzyme A carboxylase (ACC) complex. Biotin carboxylase (BC) catalyzes the carboxylation of biotin on its carrier protein (BCCP) and then the CO(2) group is transferred by the transcarboxylase to acetyl-CoA to form malonyl-CoA. The polypeptide is Acetyl-coenzyme A carboxylase carboxyl transferase subunit beta (Pelagibacter ubique (strain HTCC1062)).